The sequence spans 385 residues: 1-deoxy-D-xylulose 5-phosphate reductoisomerase (385 aa).

NADPH-binding residues include threonine 11, glycine 12, serine 13, isoleucine 14, alanine 37, arginine 38, asparagine 39, and asparagine 123. Lysine 124 provides a ligand contact to 1-deoxy-D-xylulose 5-phosphate. NADPH is bound at residue glutamate 125. Aspartate 149 contributes to the Mn(2+) binding site. Positions 150, 151, 173, and 196 each coordinate 1-deoxy-D-xylulose 5-phosphate. Glutamate 151 serves as a coordination point for Mn(2+). NADPH is bound at residue glycine 202. Serine 209, asparagine 214, lysine 215, and glutamate 218 together coordinate 1-deoxy-D-xylulose 5-phosphate. Glutamate 218 is a Mn(2+) binding site.

Belongs to the DXR family. Mg(2+) serves as cofactor. The cofactor is Mn(2+).

It catalyses the reaction 2-C-methyl-D-erythritol 4-phosphate + NADP(+) = 1-deoxy-D-xylulose 5-phosphate + NADPH + H(+). It functions in the pathway isoprenoid biosynthesis; isopentenyl diphosphate biosynthesis via DXP pathway; isopentenyl diphosphate from 1-deoxy-D-xylulose 5-phosphate: step 1/6. Functionally, catalyzes the NADPH-dependent rearrangement and reduction of 1-deoxy-D-xylulose-5-phosphate (DXP) to 2-C-methyl-D-erythritol 4-phosphate (MEP). The sequence is that of 1-deoxy-D-xylulose 5-phosphate reductoisomerase from Moorella thermoacetica (strain ATCC 39073 / JCM 9320).